Reading from the N-terminus, the 77-residue chain is Beta-defensin 135 (77 aa).

A signal peptide spans 1–24 (MATRSVLLALVVLNLLFYVPPGRS). Disulfide bonds link Cys-37/Cys-64, Cys-44/Cys-58, and Cys-48/Cys-65.

It belongs to the beta-defensin family.

Its subcellular location is the secreted. Its function is as follows. Has antibacterial activity. The sequence is that of Beta-defensin 135 (DEFB135) from Homo sapiens (Human).